A 490-amino-acid polypeptide reads, in one-letter code: UDP-N-acetylmuramate--L-alanine ligase (490 aa).

Position 130-136 (130-136) interacts with ATP; that stretch reads GTHGKTT.

The protein belongs to the MurCDEF family.

The protein localises to the cytoplasm. It carries out the reaction UDP-N-acetyl-alpha-D-muramate + L-alanine + ATP = UDP-N-acetyl-alpha-D-muramoyl-L-alanine + ADP + phosphate + H(+). It participates in cell wall biogenesis; peptidoglycan biosynthesis. In terms of biological role, cell wall formation. The chain is UDP-N-acetylmuramate--L-alanine ligase from Idiomarina loihiensis (strain ATCC BAA-735 / DSM 15497 / L2-TR).